Here is a 445-residue protein sequence, read N- to C-terminus: Glycine betaine monooxygenase oxygenase subunit (445 aa).

The region spanning 73–180 (WLFVGMTCEI…VTHAGGFLFV (108 aa)) is the Rieske domain. Residues Cys-115, His-117, Cys-135, and His-138 each coordinate [2Fe-2S] cluster. Fe cation is bound by residues His-234 and His-239.

This sequence belongs to the bacterial ring-hydroxylating dioxygenase alpha subunit family. In terms of assembly, homotrimer. The system is composed of an oxygenase subunit (BmoA) and a reductase subunit (BmoB). Maximal specific activity is obtained when the ratio of BmoA to BmoB is 5:1. [2Fe-2S] cluster serves as cofactor. Requires Fe cation as cofactor.

The enzyme catalyses glycine betaine + NADH + O2 + H(+) = N,N-dimethylglycine + formaldehyde + NAD(+) + H2O. Its activity is regulated as follows. Activity is absolutely dependent on the presence of BmoB. Glycine betaine monooxygenase activity is significantly enhanced by Fe(2+) and severely inhibited by heavy-metal ions, including Co(2+), Mn(2+), Zn(2+), Cu(2+) and Ag(+). Severely inhibited by EDTA. Its function is as follows. Involved in degradation of glycine betaine. Part of a Rieske-type oxygenase system that catalyzes the conversion of glycine betaine (GB) to dimethylglycine (DMG). This subunit is the terminal oxygenase component of the system. Is specific for GB, and does not show any activity on choline, L-carnitine, stachydrine, dimethylglycine or sarcosine. Activity is strictly dependent on NADH. The protein is Glycine betaine monooxygenase oxygenase subunit of Chromohalobacter salexigens (strain ATCC BAA-138 / DSM 3043 / CIP 106854 / NCIMB 13768 / 1H11).